A 310-amino-acid chain; its full sequence is Beta-carotene 3-hydroxylase 1, chloroplastic (310 aa).

The transit peptide at 1–51 directs the protein to the chloroplast; sequence MAAGLSTAVTFKPLHRSFSSSSTDFRLRLPKSLSGFSPSLRFKRFSVCYVV. 2 consecutive transmembrane segments (helical) span residues 98–118 and 132–152; these read YLIA…MAVY and MLEM…MEFW. The 128-residue stretch at 145 to 272 folds into the Fatty acid hydroxylase domain; that stretch reads AAVGMEFWAR…KFNGVPYGLF (128 aa). Residues 157-162 carry the Histidine box-1 motif; sequence HRALWH. Positions 169–173 match the Histidine box-2 motif; the sequence is HESHH. 2 consecutive transmembrane segments (helical) span residues 183–203 and 208–228; these read NDVF…YGFF and VPGL…AYMF. The Histidine box-3 motif lies at 230–235; that stretch reads HDGLVH. Positions 256–260 match the Histidine box-4 motif; sequence HQLHH.

Belongs to the sterol desaturase family. In terms of assembly, homodimer. In terms of tissue distribution, expressed in leaves, flowers, stems, roots and siliques.

It localises to the plastid. Its subcellular location is the chloroplast membrane. It catalyses the reaction all-trans-beta-carotene + 4 reduced [2Fe-2S]-[ferredoxin] + 2 O2 + 4 H(+) = all-trans-zeaxanthin + 4 oxidized [2Fe-2S]-[ferredoxin] + 2 H2O. Its function is as follows. Nonheme diiron monooxygenase involved in the biosynthesis of xanthophylls. Specific for beta-ring hydroxylations of beta-carotene. Also has a low activity toward the beta- and epsilon-rings of alpha-carotene. No activity with acyclic carotenoids such as lycopene and neurosporene. Uses ferredoxin as an electron donor. In Arabidopsis thaliana (Mouse-ear cress), this protein is Beta-carotene 3-hydroxylase 1, chloroplastic (BETA-OHASE 1).